A 72-amino-acid chain; its full sequence is UPF0150 protein ssl0738 (72 aa).

Belongs to the UPF0150 family.

The sequence is that of UPF0150 protein ssl0738 from Synechocystis sp. (strain ATCC 27184 / PCC 6803 / Kazusa).